Reading from the N-terminus, the 314-residue chain is Ferrochelatase (314 aa).

2 residues coordinate Fe cation: H184 and E259.

This sequence belongs to the ferrochelatase family.

Its subcellular location is the cytoplasm. It carries out the reaction heme b + 2 H(+) = protoporphyrin IX + Fe(2+). The protein operates within porphyrin-containing compound metabolism; protoheme biosynthesis; protoheme from protoporphyrin-IX: step 1/1. Its function is as follows. Catalyzes the ferrous insertion into protoporphyrin IX. The chain is Ferrochelatase from Chlamydia trachomatis serovar A (strain ATCC VR-571B / DSM 19440 / HAR-13).